Consider the following 419-residue polypeptide: L-rhamnose isomerase (419 aa).

Positions 262, 294, and 296 each coordinate Mn(2+).

The protein belongs to the rhamnose isomerase family. In terms of assembly, homotetramer. It depends on Mn(2+) as a cofactor.

It is found in the cytoplasm. The catalysed reaction is L-rhamnopyranose = L-rhamnulose. It participates in carbohydrate degradation; L-rhamnose degradation; glycerone phosphate from L-rhamnose: step 1/3. Its function is as follows. Catalyzes the interconversion of L-rhamnose and L-rhamnulose. The chain is L-rhamnose isomerase from Salmonella typhi.